Reading from the N-terminus, the 134-residue chain is Large-conductance mechanosensitive channel (134 aa).

2 helical membrane-spanning segments follow: residues 16-36 (VIDL…VTAL) and 81-101 (GDFL…FIIV).

It belongs to the MscL family. Homopentamer.

It is found in the cell inner membrane. Functionally, channel that opens in response to stretch forces in the membrane lipid bilayer. May participate in the regulation of osmotic pressure changes within the cell. This Xylella fastidiosa (strain M12) protein is Large-conductance mechanosensitive channel.